Here is a 183-residue protein sequence, read N- to C-terminus: Translation initiation factor IF-3 (183 aa).

This sequence belongs to the IF-3 family. In terms of assembly, monomer.

It localises to the cytoplasm. Its function is as follows. IF-3 binds to the 30S ribosomal subunit and shifts the equilibrium between 70S ribosomes and their 50S and 30S subunits in favor of the free subunits, thus enhancing the availability of 30S subunits on which protein synthesis initiation begins. The protein is Translation initiation factor IF-3 of Pseudomonas putida (strain ATCC 700007 / DSM 6899 / JCM 31910 / BCRC 17059 / LMG 24140 / F1).